The following is a 375-amino-acid chain: Probable dipeptidase PepE (375 aa).

2 consecutive transmembrane segments (helical) span residues 15–35 (LALAAAATADAGLAGLVITPG) and 55–75 (LVLPAAGAPAVVLPRLELAAL). Positions 230, 242, 306, 335, and 349 each coordinate Mn(2+).

Belongs to the peptidase M24B family. Mn(2+) is required as a cofactor.

It localises to the cell membrane. This Mycobacterium bovis (strain ATCC BAA-935 / AF2122/97) protein is Probable dipeptidase PepE (pepE).